Here is a 305-residue protein sequence, read N- to C-terminus: Mitogen-activated protein kinase kinase 10 (305 aa).

Serine 34 carries the phosphoserine modification. Positions 48–302 (LEKLSVLGQG…VEELLRHSFV (255 aa)) constitute a Protein kinase domain. Residues 54–62 (LGQGSGGTV) and lysine 77 contribute to the ATP site. Residue aspartate 165 is the Proton acceptor of the active site. Threonine 200 bears the Phosphothreonine mark.

Belongs to the protein kinase superfamily. STE Ser/Thr protein kinase family. MAP kinase kinase subfamily. As to quaternary structure, interacts with P.syringae type III effector HopF2.

It catalyses the reaction L-seryl-[protein] + ATP = O-phospho-L-seryl-[protein] + ADP + H(+). The enzyme catalyses L-threonyl-[protein] + ATP = O-phospho-L-threonyl-[protein] + ADP + H(+). The catalysed reaction is L-tyrosyl-[protein] + ATP = O-phospho-L-tyrosyl-[protein] + ADP + H(+). The polypeptide is Mitogen-activated protein kinase kinase 10 (MKK10) (Arabidopsis thaliana (Mouse-ear cress)).